The sequence spans 152 residues: Small ribosomal subunit protein uS13 (152 aa).

It belongs to the universal ribosomal protein uS13 family. As to quaternary structure, part of the 30S ribosomal subunit. Forms a loose heterodimer with protein S19. Forms two bridges to the 50S subunit in the 70S ribosome.

In terms of biological role, located at the top of the head of the 30S subunit, it contacts several helices of the 16S rRNA. In the 70S ribosome it contacts the 23S rRNA (bridge B1a) and protein L5 of the 50S subunit (bridge B1b), connecting the 2 subunits; these bridges are implicated in subunit movement. The sequence is that of Small ribosomal subunit protein uS13 from Pyrobaculum arsenaticum (strain DSM 13514 / JCM 11321 / PZ6).